The primary structure comprises 412 residues: uncharacterized protein (412 aa).

Residues 20 to 199 (FFYFDFDAFF…LPIVELPGIG (180 aa)) form the UmuC domain.

The protein belongs to the DNA polymerase type-Y family.

This is an uncharacterized protein from Mycoplasma pneumoniae (strain ATCC 29342 / M129 / Subtype 1) (Mycoplasmoides pneumoniae).